We begin with the raw amino-acid sequence, 232 residues long: Triosephosphate isomerase (232 aa).

6 to 8 (NFK) is a substrate binding site. Histidine 90 (electrophile) is an active-site residue. Glutamate 159 serves as the catalytic Proton acceptor. Positions 165 and 195 each coordinate substrate.

The protein belongs to the triosephosphate isomerase family. Homodimer.

It localises to the cytoplasm. It carries out the reaction D-glyceraldehyde 3-phosphate = dihydroxyacetone phosphate. It functions in the pathway carbohydrate biosynthesis; gluconeogenesis. It participates in carbohydrate degradation; glycolysis; D-glyceraldehyde 3-phosphate from glycerone phosphate: step 1/1. Its function is as follows. Involved in the gluconeogenesis. Catalyzes stereospecifically the conversion of dihydroxyacetone phosphate (DHAP) to D-glyceraldehyde-3-phosphate (G3P). The chain is Triosephosphate isomerase from Wolinella succinogenes (strain ATCC 29543 / DSM 1740 / CCUG 13145 / JCM 31913 / LMG 7466 / NCTC 11488 / FDC 602W) (Vibrio succinogenes).